The sequence spans 156 residues: Small ribosomal subunit protein uS7 (156 aa).

Belongs to the universal ribosomal protein uS7 family. In terms of assembly, part of the 30S ribosomal subunit. Contacts proteins S9 and S11.

One of the primary rRNA binding proteins, it binds directly to 16S rRNA where it nucleates assembly of the head domain of the 30S subunit. Is located at the subunit interface close to the decoding center, probably blocks exit of the E-site tRNA. In Nitrobacter hamburgensis (strain DSM 10229 / NCIMB 13809 / X14), this protein is Small ribosomal subunit protein uS7.